The sequence spans 357 residues: Phosphate acyltransferase (357 aa).

This sequence belongs to the PlsX family. In terms of assembly, homodimer. Probably interacts with PlsY.

The protein resides in the cytoplasm. The enzyme catalyses a fatty acyl-[ACP] + phosphate = an acyl phosphate + holo-[ACP]. It participates in lipid metabolism; phospholipid metabolism. In terms of biological role, catalyzes the reversible formation of acyl-phosphate (acyl-PO(4)) from acyl-[acyl-carrier-protein] (acyl-ACP). This enzyme utilizes acyl-ACP as fatty acyl donor, but not acyl-CoA. This Herminiimonas arsenicoxydans protein is Phosphate acyltransferase.